The primary structure comprises 306 residues: D-alanine--D-alanine ligase (306 aa).

Residues 101–303 (KQVWQGIGLT…FSQLVVKILE (203 aa)) form the ATP-grasp domain. An ATP-binding site is contributed by 134 to 189 (VADLGLPLIVKPSLEGSSVGMTKVNEISELRGALEAAFRYDVDLLVEKWLHGPEYT). Positions 257, 270, and 272 each coordinate Mg(2+).

It belongs to the D-alanine--D-alanine ligase family. It depends on Mg(2+) as a cofactor. Requires Mn(2+) as cofactor.

The protein localises to the cytoplasm. It catalyses the reaction 2 D-alanine + ATP = D-alanyl-D-alanine + ADP + phosphate + H(+). It participates in cell wall biogenesis; peptidoglycan biosynthesis. In terms of biological role, cell wall formation. The protein is D-alanine--D-alanine ligase of Photorhabdus laumondii subsp. laumondii (strain DSM 15139 / CIP 105565 / TT01) (Photorhabdus luminescens subsp. laumondii).